Consider the following 545-residue polypeptide: 4-coumarate--CoA ligase 1 (545 aa).

Positions 192, 193, 194, 195, 196, and 200 each coordinate ATP. (E)-4-coumaroyl-AMP is bound by residues Tyr-242 and Ser-246. Lys-263 contacts CoA. The segment at Asp-265–Gln-334 is SBD1. The (E)-4-coumaroyl-AMP site is built by Ala-312, Gln-334, Gly-335, Thr-339, and Met-347. ATP contacts are provided by Gln-334, Gly-335, and Thr-339. Residues Gly-335 to Tyr-402 are SBD2. ATP is bound by residues Asp-423 and Arg-438. Residues Lys-440 and Lys-444 each contribute to the (E)-4-coumaroyl-AMP site. Residues Lys-446 and Gly-447 each coordinate CoA. Lys-529 contacts ATP.

It belongs to the ATP-dependent AMP-binding enzyme family. Mg(2+) is required as a cofactor.

It carries out the reaction (E)-4-coumarate + ATP + CoA = (E)-4-coumaroyl-CoA + AMP + diphosphate. The enzyme catalyses (E)-4-coumarate + ATP + H(+) = (E)-4-coumaroyl-AMP + diphosphate. The catalysed reaction is (E)-4-coumaroyl-AMP + CoA = (E)-4-coumaroyl-CoA + AMP + H(+). It participates in phytoalexin biosynthesis; 3,4',5-trihydroxystilbene biosynthesis; 3,4',5-trihydroxystilbene from trans-4-coumarate: step 1/2. Its function is as follows. Carboxylate--CoA ligase that may use 4-coumarate as substrate. Follows a two-step reaction mechanism, wherein the carboxylate substrate first undergoes adenylation by ATP, followed by a thioesterification in the presence of CoA to yield the final CoA thioester. The polypeptide is 4-coumarate--CoA ligase 1 (4CL1) (Solanum tuberosum (Potato)).